A 188-amino-acid chain; its full sequence is dCTP deaminase (188 aa).

DCTP contacts are provided by residues 111–116 (KSTYAR), 135–137 (TLE), Gln156, Tyr170, Lys179, and Gln180. The active-site Proton donor/acceptor is the Glu137.

It belongs to the dCTP deaminase family. As to quaternary structure, homotrimer.

The enzyme catalyses dCTP + H2O + H(+) = dUTP + NH4(+). It functions in the pathway pyrimidine metabolism; dUMP biosynthesis; dUMP from dCTP (dUTP route): step 1/2. Functionally, catalyzes the deamination of dCTP to dUTP. The chain is dCTP deaminase from Rickettsia africae (strain ESF-5).